The following is a 398-amino-acid chain: Histidinol-phosphate aminotransferase (398 aa).

Residues 1-10 (MTGQRATPQP) show a composition bias toward polar residues. The interval 1–30 (MTGQRATPQPTLDDLPLRDDLRGKSPYGAP) is disordered. Lys234 is subject to N6-(pyridoxal phosphate)lysine.

Belongs to the class-II pyridoxal-phosphate-dependent aminotransferase family. Histidinol-phosphate aminotransferase subfamily. As to quaternary structure, homodimer. Pyridoxal 5'-phosphate serves as cofactor.

It catalyses the reaction L-histidinol phosphate + 2-oxoglutarate = 3-(imidazol-4-yl)-2-oxopropyl phosphate + L-glutamate. It participates in amino-acid biosynthesis; L-histidine biosynthesis; L-histidine from 5-phospho-alpha-D-ribose 1-diphosphate: step 7/9. The sequence is that of Histidinol-phosphate aminotransferase from Mycolicibacterium paratuberculosis (strain ATCC BAA-968 / K-10) (Mycobacterium paratuberculosis).